We begin with the raw amino-acid sequence, 296 residues long: Transmembrane protein 156 (296 aa).

At M1–T4 the chain is on the cytoplasmic side. Residues A5–F25 traverse the membrane as a helical segment. Topologically, residues K26–S211 are extracellular. Residues N45 and N156 are each glycosylated (N-linked (GlcNAc...) asparagine). The chain crosses the membrane as a helical span at residues M212–I232. Residues R233–L296 are Cytoplasmic-facing.

The protein resides in the membrane. This is Transmembrane protein 156 (TMEM156) from Homo sapiens (Human).